The primary structure comprises 182 residues: MQTEHVILLNAQGVPTGTLEKYAAHTADTLLHLAFSSWLFNAKGQLLVTRRALSKKAWPGVWTNSVCGHPQLGESNEDAVIRRCRFELGVEITAPEPVYPDFRYRATDPNGIVENEVCPVFAARTTSALQINDDEVMDYQWCDLADVLHGIDATPWAFSPWMVMQATNREARKRLSAFTQLK.

Residues histidine 25 and histidine 32 each contribute to the Mn(2+) site. The region spanning 30 to 164 (LLHLAFSSWL…PWAFSPWMVM (135 aa)) is the Nudix hydrolase domain. Residue cysteine 67 is part of the active site. Mn(2+) is bound at residue histidine 69. Glutamate 87 is a binding site for Mg(2+). Residues glutamate 114 and glutamate 116 each coordinate Mn(2+). Glutamate 116 is a catalytic residue.

The protein belongs to the IPP isomerase type 1 family. As to quaternary structure, homodimer. It depends on Mg(2+) as a cofactor. Mn(2+) is required as a cofactor.

The protein resides in the cytoplasm. It carries out the reaction isopentenyl diphosphate = dimethylallyl diphosphate. The protein operates within isoprenoid biosynthesis; dimethylallyl diphosphate biosynthesis; dimethylallyl diphosphate from isopentenyl diphosphate: step 1/1. Its function is as follows. Catalyzes the 1,3-allylic rearrangement of the homoallylic substrate isopentenyl (IPP) to its highly electrophilic allylic isomer, dimethylallyl diphosphate (DMAPP). In Escherichia coli O7:K1 (strain IAI39 / ExPEC), this protein is Isopentenyl-diphosphate Delta-isomerase.